A 450-amino-acid chain; its full sequence is Tubulin alpha-3 chain (450 aa).

7 residues coordinate GTP: glutamine 11, glutamate 71, glycine 144, threonine 145, threonine 179, asparagine 206, and asparagine 228. Residue glutamate 71 coordinates Mg(2+). Glutamate 254 is a catalytic residue.

Belongs to the tubulin family. As to quaternary structure, dimer of alpha and beta chains. A typical microtubule is a hollow water-filled tube with an outer diameter of 25 nm and an inner diameter of 15 nM. Alpha-beta heterodimers associate head-to-tail to form protofilaments running lengthwise along the microtubule wall with the beta-tubulin subunit facing the microtubule plus end conferring a structural polarity. Microtubules usually have 13 protofilaments but different protofilament numbers can be found in some organisms and specialized cells. Requires Mg(2+) as cofactor. In terms of processing, undergoes a tyrosination/detyrosination cycle, the cyclic removal and re-addition of a C-terminal tyrosine residue by the enzymes tubulin tyrosine carboxypeptidase (TTCP) and tubulin tyrosine ligase (TTL), respectively.

The protein resides in the cytoplasm. It is found in the cytoskeleton. The enzyme catalyses GTP + H2O = GDP + phosphate + H(+). In terms of biological role, tubulin is the major constituent of microtubules, a cylinder consisting of laterally associated linear protofilaments composed of alpha- and beta-tubulin heterodimers. Microtubules grow by the addition of GTP-tubulin dimers to the microtubule end, where a stabilizing cap forms. Below the cap, tubulin dimers are in GDP-bound state, owing to GTPase activity of alpha-tubulin. The chain is Tubulin alpha-3 chain (TUBA3) from Eleusine indica (Goosegrass).